Reading from the N-terminus, the 116-residue chain is UPF0298 protein EF_2453 (116 aa).

This sequence belongs to the UPF0298 family.

The protein localises to the cytoplasm. In Enterococcus faecalis (strain ATCC 700802 / V583), this protein is UPF0298 protein EF_2453.